The chain runs to 106 residues: Iron-sulfur cluster assembly protein CyaY (106 aa).

The protein belongs to the frataxin family.

Involved in iron-sulfur (Fe-S) cluster assembly. May act as a regulator of Fe-S biogenesis. The chain is Iron-sulfur cluster assembly protein CyaY from Dickeya chrysanthemi (Pectobacterium chrysanthemi).